The following is a 363-amino-acid chain: Cell division cycle-associated protein 3 (363 aa).

Over residues 1–12 (MGSAESKAQVTP) the composition is skewed to polar residues. Disordered regions lie at residues 1-81 (MGSA…TPLR), 126-152 (VESQ…KAET), 191-210 (MNDQ…EESP), and 231-363 (ENLN…HSNS). The segment at 93 to 152 (KQLSEVFVAEDSSTEGGPLGFTGPEATNLERQVVESQTAPPAGEHVNDHEVEPSVEKAET) is F-box-like. Residues 137–152 (HVNDHEVEPSVEKAET) are compositionally biased toward basic and acidic residues. A compositionally biased stretch (acidic residues) spans 192–210 (NDQEESPIAETMNDQEESP). Residues 259 to 285 (SVVSTESTQATGQQQKTRGKSPRSSGV) are compositionally biased toward polar residues. Low complexity predominate over residues 296-308 (LLSSSSGRSPLRI). A compositionally biased stretch (polar residues) spans 311-321 (EDNSPNTNTQH). Positions 353 to 355 (KEN) match the KEN box motif.

Interacts with wee1, when wee1 is phosphorylated at 'Ser-38'. Post-translationally, phosphorylated. Ubiquitinated and degraded by the APC/C-Cdh1 complex during G1 phase.

The protein localises to the cytoplasm. The protein resides in the cytosol. Its pathway is protein modification; protein ubiquitination. F-box-like protein which is required for entry into mitosis. Acts by participating in E3 ligase complexes that mediate the ubiquitination and degradation of WEE1 kinase at G2/M phase. The protein is Cell division cycle-associated protein 3 (cdca3) of Xenopus laevis (African clawed frog).